A 399-amino-acid polypeptide reads, in one-letter code: Coiled-coil domain-containing protein 85C-B (399 aa).

2 coiled-coil regions span residues 52–84 (NRSL…ELCC) and 113–144 (KEVS…DIIL). Residues 151–199 (NGAGSRSSIDSQSSLSNLNGGSGTVRDVGDGSSTSSGGSAGSPDHHHNH) form a disordered region. Positions 155–169 (SRSSIDSQSSLSNLN) are enriched in low complexity.

Belongs to the CCDC85 family.

Its subcellular location is the cell junction. It is found in the tight junction. The protein resides in the adherens junction. In terms of biological role, may play a role in cell-cell adhesion and epithelium development through its interaction with proteins of the beta-catenin family. May play an important role in cortical development, especially in the maintenance of radial glia. This chain is Coiled-coil domain-containing protein 85C-B (ccdc85cb), found in Danio rerio (Zebrafish).